The primary structure comprises 380 residues: Probable polyglutamine synthesis accessory protein MT0602 (380 aa).

The protein belongs to the CapA family.

Its function is as follows. Could be involved in the biosynthesis, transport or localization of poly-alpha-L-glutamine (PLG), a cell wall component. Contributes to stress tolerance and virulence. The polypeptide is Probable polyglutamine synthesis accessory protein MT0602 (Mycobacterium tuberculosis (strain CDC 1551 / Oshkosh)).